A 329-amino-acid polypeptide reads, in one-letter code: Lipoyl synthase (329 aa).

Residues 1–23 (MTDLTATPAPAEPAASAYDPTAK) are disordered. 7 residues coordinate [4Fe-4S] cluster: Cys76, Cys81, Cys87, Cys102, Cys106, Cys109, and Ser316. In terms of domain architecture, Radical SAM core spans 87-305 (CFGKGTATFM…EEEAYKMGFT (219 aa)).

It belongs to the radical SAM superfamily. Lipoyl synthase family. It depends on [4Fe-4S] cluster as a cofactor.

The protein localises to the cytoplasm. It carries out the reaction [[Fe-S] cluster scaffold protein carrying a second [4Fe-4S](2+) cluster] + N(6)-octanoyl-L-lysyl-[protein] + 2 oxidized [2Fe-2S]-[ferredoxin] + 2 S-adenosyl-L-methionine + 4 H(+) = [[Fe-S] cluster scaffold protein] + N(6)-[(R)-dihydrolipoyl]-L-lysyl-[protein] + 4 Fe(3+) + 2 hydrogen sulfide + 2 5'-deoxyadenosine + 2 L-methionine + 2 reduced [2Fe-2S]-[ferredoxin]. It participates in protein modification; protein lipoylation via endogenous pathway; protein N(6)-(lipoyl)lysine from octanoyl-[acyl-carrier-protein]: step 2/2. Functionally, catalyzes the radical-mediated insertion of two sulfur atoms into the C-6 and C-8 positions of the octanoyl moiety bound to the lipoyl domains of lipoate-dependent enzymes, thereby converting the octanoylated domains into lipoylated derivatives. The sequence is that of Lipoyl synthase from Burkholderia mallei (strain NCTC 10247).